Here is a 279-residue protein sequence, read N- to C-terminus: DegV domain-containing protein SAR1438 (279 aa).

The DegV domain occupies 4-278 (QIIVTDSTSD…QGAIGLVVLK (275 aa)). Hexadecanoate-binding residues include threonine 61 and serine 93.

Its function is as follows. May bind long-chain fatty acids, such as palmitate, and may play a role in lipid transport or fatty acid metabolism. This chain is DegV domain-containing protein SAR1438, found in Staphylococcus aureus (strain MRSA252).